The sequence spans 122 residues: Large ribosomal subunit protein uL14 (122 aa).

It belongs to the universal ribosomal protein uL14 family. As to quaternary structure, part of the 50S ribosomal subunit. Forms a cluster with proteins L3 and L19. In the 70S ribosome, L14 and L19 interact and together make contacts with the 16S rRNA in bridges B5 and B8.

Its function is as follows. Binds to 23S rRNA. Forms part of two intersubunit bridges in the 70S ribosome. The sequence is that of Large ribosomal subunit protein uL14 from Trichodesmium erythraeum (strain IMS101).